Consider the following 486-residue polypeptide: Protein nucleotidyltransferase YdiU (486 aa).

Residues Gly-90, Gly-92, Arg-93, Lys-113, Asp-125, Gly-126, Arg-176, and Arg-183 each contribute to the ATP site. Asp-252 (proton acceptor) is an active-site residue. Mg(2+) is bound by residues Asn-253 and Asp-262. Asp-262 serves as a coordination point for ATP.

This sequence belongs to the SELO family. The cofactor is Mg(2+). Requires Mn(2+) as cofactor.

It catalyses the reaction L-seryl-[protein] + ATP = 3-O-(5'-adenylyl)-L-seryl-[protein] + diphosphate. The catalysed reaction is L-threonyl-[protein] + ATP = 3-O-(5'-adenylyl)-L-threonyl-[protein] + diphosphate. It carries out the reaction L-tyrosyl-[protein] + ATP = O-(5'-adenylyl)-L-tyrosyl-[protein] + diphosphate. The enzyme catalyses L-histidyl-[protein] + UTP = N(tele)-(5'-uridylyl)-L-histidyl-[protein] + diphosphate. It catalyses the reaction L-seryl-[protein] + UTP = O-(5'-uridylyl)-L-seryl-[protein] + diphosphate. The catalysed reaction is L-tyrosyl-[protein] + UTP = O-(5'-uridylyl)-L-tyrosyl-[protein] + diphosphate. Functionally, nucleotidyltransferase involved in the post-translational modification of proteins. It can catalyze the addition of adenosine monophosphate (AMP) or uridine monophosphate (UMP) to a protein, resulting in modifications known as AMPylation and UMPylation. The protein is Protein nucleotidyltransferase YdiU of Pseudomonas putida (strain W619).